Consider the following 244-residue polypeptide: Triosephosphate isomerase (244 aa).

8–10 (NWK) contributes to the substrate binding site. Histidine 93 acts as the Electrophile in catalysis. Catalysis depends on glutamate 161, which acts as the Proton acceptor. Residues glycine 167, serine 206, and 227-228 (GG) each bind substrate.

This sequence belongs to the triosephosphate isomerase family. In terms of assembly, homodimer.

Its subcellular location is the cytoplasm. It carries out the reaction D-glyceraldehyde 3-phosphate = dihydroxyacetone phosphate. The protein operates within carbohydrate biosynthesis; gluconeogenesis. It functions in the pathway carbohydrate degradation; glycolysis; D-glyceraldehyde 3-phosphate from glycerone phosphate: step 1/1. Functionally, involved in the gluconeogenesis. Catalyzes stereospecifically the conversion of dihydroxyacetone phosphate (DHAP) to D-glyceraldehyde-3-phosphate (G3P). The polypeptide is Triosephosphate isomerase (Deinococcus radiodurans (strain ATCC 13939 / DSM 20539 / JCM 16871 / CCUG 27074 / LMG 4051 / NBRC 15346 / NCIMB 9279 / VKM B-1422 / R1)).